The sequence spans 28 residues: VGCEECPAHCKGKNAIPTCDDGVCNCNV.

3 disulfides stabilise this stretch: C3-C19, C6-C24, and C10-C26.

As to expression, expressed by the venom gland.

Its subcellular location is the secreted. Calcium channel activator. Rapidly and reversibly activates ryanodine receptor 1 (RYR1). This chain is Potassium channel toxin alpha-KTx 9.7, found in Hottentotta judaicus (Black scorpion).